The primary structure comprises 299 residues: Anti-sigma-D factor RsdA (299 aa).

The helical transmembrane segment at 86-106 (LAAVGSVAAALLVLSGFGAVV) threads the bilayer. A disordered region spans residues 187–299 (NTKVETRDPN…APETPVSPTH (113 aa)). Composition is skewed to low complexity over residues 201–212 (PGSPSNPAAPGS) and 250–271 (PNSTSTVAASPSTPSSKPEPGS).

As to quaternary structure, interacts with ECF RNA polymerase sigma factor SigD; this should inhibit the interaction of SigD with the RNA polymerase catalytic core. Post-translationally, the cytosolic fragment is degraded by a ClpP1-ClpP2-ClpX complex, as would be expected after S1P and S2P intramembrane proteolysis. This releases SigD so that it may bind to the RNA polymerase catalytic core.

It is found in the cell membrane. Functionally, an anti-sigma factor for extracytoplasmic function (ECF) sigma factor SigD. ECF sigma factors are held in an inactive form by an anti-sigma factor until released by regulated intramembrane proteolysis (RIP). RIP occurs when an extracytoplasmic signal triggers a concerted proteolytic cascade to transmit information and elicit cellular responses. The membrane-spanning regulatory substrate protein is first cut extracytoplasmically (site-1 protease, S1P), then within the membrane itself (site-2 protease, S2P), while cytoplasmic proteases finish degrading the regulatory protein, liberating the sigma factor. Neither S1P nor S2P proteases have been so far identified for this anti-sigma factor. The protein is Anti-sigma-D factor RsdA (rsda) of Mycobacterium bovis (strain ATCC BAA-935 / AF2122/97).